The sequence spans 817 residues: MTSFQEVPLQTSNFAHVIFQNVAKSYLPNAHLECHYTLTPYIHPHPKDWVGIFKVGWSTARDYYTFLWSPMPEHYVEGSAVNCELAFQGYYLPNDDGEFYQFCYVTHKGEIRGASTPFQFRAASPVEELLTMEDEGNSDMLVVTTKAGLLELKIEKTMKEKEELLKLIAVLEKETTQLREQVGRMERELNHEKERGDQLQAEQKALTKVSQSLKMENEEFKKRYNDVTSKALQLEEDIVSVTHKAIEKETELDSLKDKLKKAQCEREQLECQLKTEKDEKELYKVHLKNTEIENTKLVSEVQTLKNLDGNKENMITHFKEEISRLQFSLAEKENLQRTFLLTTSSKEDTFILKEQLRKAEEQIQATRQEAVFLAKELSDAVNVRDKTMADLHTAHLENEKVKKQLTDALAELKLSAVNKDQEKTDTLEHELRREVEDLKLRLQMAADHYKEKFKECQRLQKQINKLSDQSANSNSVFTKKIGSQQKVNDASINTDPAATASTVDVKPLPSTAETDFDNLTKGQVSEMTKEIADKTEKYNKCKQLLQDEKTKCNKYADELAKMELKWKEQVKIAENIKLELAEVVDNYKLQLAEKEKEISGLTSYWENLSREKEHKRSVENQAERKLEGQNSQSPHQISQCLKTSSEKSGHVPAVSNTQPVLQYGNPYATPETRDGADGAFYPDEIQRPPVRVPSWGLEDNVVCSQPARNLSRPDGLEDPEDSKEDEKVPTAPDPPSQHLRGHGTGFCFDPSFDVQKKCPLCELMFPPNYDQSKFEEHVESHWKVCPMCSEQFPPDYDQQVFERHVQTHFDQNVLNFD.

Phosphoserine is present on residues Ser-124 and Ser-138. A coiled-coil region spans residues Thr-144–Gly-628. The tract at residues Glu-320–Asp-420 is oligomerization. A compositionally biased stretch (basic and acidic residues) spans Ser-609–Glu-627. The disordered stretch occupies residues Ser-609–Ile-685. Ser-617 carries the phosphoserine; by IKKA modification. Positions Gly-628–Thr-643 are enriched in polar residues. Ser-633 carries the post-translational modification Phosphoserine. Ser-694 carries the phosphoserine; by IKKA modification. The segment at Ser-704–His-742 is disordered. 2 UBZ1-type zinc fingers span residues Gln-755 to His-781 and Trp-782 to His-808. Zn(2+) contacts are provided by Cys-758, Cys-761, His-777, His-781, Cys-785, Cys-788, His-804, and His-808.

Homooligomer. Interacts with TNFAIP3. Interacts with STARD13. Interacts with MYO6. Interacts with TOM1; the interaction is indirect and is mediated by MYO6, which acts as a bridge between TOM1 and TAX1BP1. Interacts with MAVS; this interaction induces MAVS polyubiquitination. Interacts with TNIP1. Interacts with TRAF6; this interaction mediates deubiquitination of TRAF6 and inhibition of NF-kappa-B activation. Interacts with RIPK1; this interaction negatively regulates RIPK1 ubiquitination. Interacts with NBR1. Interacts with TBK1. Interacts with RB1CC1. Interacts with SQSTM1. Interacts with AZI2. In terms of processing, phosphorylated in the C-terminal region by CHUK/IKKA leading to NF-kappa-B signaling down-regulation.

Its subcellular location is the cytoplasm. The protein localises to the mitochondrion. It is found in the preautophagosomal structure. The protein resides in the cytoplasmic vesicle. It localises to the autophagosome. Its function is as follows. Ubiquitin-binding adapter that participates in inflammatory, antiviral and innate immune processes as well as selective autophagy regulation. Plays a key role in the negative regulation of NF-kappa-B and IRF3 signalings by acting as an adapter for the ubiquitin-editing enzyme A20/TNFAIP3 to bind and inactivate its substrates. Disrupts the interactions between the E3 ubiquitin ligase TRAF3 and TBK1/IKBKE to attenuate 'Lys63'-linked polyubiquitination of TBK1 and thereby IFN-beta production. Also recruits A20/TNFAIP3 to ubiquitinated signaling proteins TRAF6 and RIPK1, leading to their deubiquitination and disruption of IL-1 and TNF-induced NF-kappa-B signaling pathways. Inhibits virus-induced apoptosis by inducing the 'Lys-48'-linked polyubiquitination and degradation of MAVS via recruitment of the E3 ligase ITCH, thereby attenuating MAVS-mediated apoptosis signaling. As a macroautophagy/autophagy receptor, facilitates the xenophagic clearance of pathogenic bacteria such as Salmonella typhimurium and Mycobacterium tuberculosis. Upon NBR1 recruitment to the SQSTM1-ubiquitin condensates, acts as the major recruiter of RB1CC1 to these ubiquitin condensates to promote their autophagic degradation. This is Tax1-binding protein 1 homolog (TAX1BP1) from Bos taurus (Bovine).